A 260-amino-acid polypeptide reads, in one-letter code: Fibronectin type III domain-containing protein 5 (260 aa).

The interval 1–56 (MQAARGGAGRPERPGRPGRGPERERERPPGAGAASPCAAPGLPAGGATIHPGSPSA) is disordered. Residues 10-28 (RPERPGRPGRGPERERERP) are compositionally biased toward basic and acidic residues. The segment covering 29–56 (PGAGAASPCAAPGLPAGGATIHPGSPSA) has biased composition (low complexity). The region spanning 84–175 (APVNVTVRHL…EPVLFKTPRE (92 aa)) is the Fibronectin type-III domain. N-linked (GlcNAc...) asparagine glycans are attached at residues asparagine 87 and asparagine 132. Residues 201–221 (GEVLIIVVVLFMWAGVIALFC) traverse the membrane as a helical segment. Positions 230–241 (NEPNNNKEKTKS) are enriched in basic and acidic residues. The interval 230-260 (NEPNNNKEKTKSASETSTPEHQGGGLLRSKI) is disordered. Residues 251–260 (QGGGLLRSKI) are compositionally biased toward gly residues. The Microbody targeting signal motif lies at 258-260 (SKI).

Dimer; may exist in other oligomeric forms. The extracellular domain is cleaved and released from the cell membrane. Post-translationally, N-Glycosylated. Widely expressed, with highest levels in heart. Very low expression, if any, in colon, pancreas and spleen.

It is found in the cell membrane. The protein resides in the peroxisome membrane. The protein localises to the secreted. In terms of biological role, mediates beneficial effects of muscular exercise. Induces browning of white adipose tissue by stimulating UCP1 expression, at least in part, via the nuclear receptor PPARA. The protein is Fibronectin type III domain-containing protein 5 (FNDC5) of Homo sapiens (Human).